The chain runs to 394 residues: Acetyl-CoA acetyltransferase (394 aa).

Cys-88 (acyl-thioester intermediate) is an active-site residue. Residues His-349 and Cys-379 each act as proton acceptor in the active site.

The protein belongs to the thiolase-like superfamily. Thiolase family.

The protein resides in the cytoplasm. The enzyme catalyses 2 acetyl-CoA = acetoacetyl-CoA + CoA. It participates in metabolic intermediate biosynthesis; (R)-mevalonate biosynthesis; (R)-mevalonate from acetyl-CoA: step 1/3. The sequence is that of Acetyl-CoA acetyltransferase (atoB) from Escherichia coli (strain K12).